Here is a 408-residue protein sequence, read N- to C-terminus: MRLDQVRAALDRRLDPASRAPLAVGFSGGGDSLFLLKTVLDWARPLDRPVLALVVDHQLQPQSTAWTAEAVAKARALGAAALGLTWTDQKPRTGLPAAARRARHALLATAAREAGARVLILGHTASDLAEGVAMRAEGSSVSNPRAWAPSPVWPEGRGLFVLRPLLTLTRAEIRDALTREGETWLDDPANLDLRYARARARAAGALTPLLPVRESPPPGVFEIDPAGAIRLPRDVVPAHLAAALLCASGAERPPRGDRLARLVERLRSGARFTATLAGARIEADQAVLICRDAGEAARGGLARLDLAPGACGVWDGRWEVVAGKTALAVVALRGRTSSLPAEQRARLSAIAPAVRPSLPVLLSLDGDAPGELVLDDLQLEADGEARVRSLVPDRFKAAVGLLDQESVT.

27–32 serves as a coordination point for ATP; it reads SGGGDS.

This sequence belongs to the tRNA(Ile)-lysidine synthase family.

The protein resides in the cytoplasm. It carries out the reaction cytidine(34) in tRNA(Ile2) + L-lysine + ATP = lysidine(34) in tRNA(Ile2) + AMP + diphosphate + H(+). Functionally, ligates lysine onto the cytidine present at position 34 of the AUA codon-specific tRNA(Ile) that contains the anticodon CAU, in an ATP-dependent manner. Cytidine is converted to lysidine, thus changing the amino acid specificity of the tRNA from methionine to isoleucine. In Caulobacter vibrioides (strain ATCC 19089 / CIP 103742 / CB 15) (Caulobacter crescentus), this protein is tRNA(Ile)-lysidine synthase.